The sequence spans 284 residues: MTNKTVKIGNIDVANHKPFVLFGGMNVLESRDMAMQVCEKYVEVTDKLGVPYVFKASFDKANRSSIHSYRGPGMEEGLKIFQELKKTFGVKVIADVHEIYQCNPVAEVVDVIQLPAFLARQTDLVEAMARTGAVINVKKPQFLSPGQMGNIVEKIEECGNDKVILCDRGTNFGYDNLVVDMLGFGVMKKASKGCPVIFDVTHSLQCRDPFGAASGGRREQVTELARAGMAVGIAGLFLEAHPDPNNAKCDGPSALPLSALEGFVVQMKAIDELVKSFPELDTSK.

The protein belongs to the KdsA family.

It is found in the cytoplasm. It carries out the reaction D-arabinose 5-phosphate + phosphoenolpyruvate + H2O = 3-deoxy-alpha-D-manno-2-octulosonate-8-phosphate + phosphate. It functions in the pathway carbohydrate biosynthesis; 3-deoxy-D-manno-octulosonate biosynthesis; 3-deoxy-D-manno-octulosonate from D-ribulose 5-phosphate: step 2/3. It participates in bacterial outer membrane biogenesis; lipopolysaccharide biosynthesis. The polypeptide is 2-dehydro-3-deoxyphosphooctonate aldolase (Actinobacillus succinogenes (strain ATCC 55618 / DSM 22257 / CCUG 43843 / 130Z)).